The primary structure comprises 303 residues: N-acetyl-D-glucosamine kinase (303 aa).

ATP-binding positions include 4 to 11 and 133 to 140; these read GFDIGGTK and GVGGGLIF. His157, Cys177, Cys179, and Cys184 together coordinate Zn(2+).

The protein belongs to the ROK (NagC/XylR) family. NagK subfamily.

The catalysed reaction is N-acetyl-D-glucosamine + ATP = N-acetyl-D-glucosamine 6-phosphate + ADP + H(+). It functions in the pathway cell wall biogenesis; peptidoglycan recycling. Functionally, catalyzes the phosphorylation of N-acetyl-D-glucosamine (GlcNAc) derived from cell-wall degradation, yielding GlcNAc-6-P. The protein is N-acetyl-D-glucosamine kinase of Escherichia coli (strain K12 / DH10B).